The primary structure comprises 573 residues: Splicing factor U2af large subunit B (573 aa).

The segment covering 1 to 12 (MPDYEGNGEDID) has biased composition (acidic residues). Residues 1–187 (MPDYEGNGED…DMAPPTSAML (187 aa)) are disordered. Positions 38–145 (SDSKSQHSSR…QREHAKDRES (108 aa)) are enriched in basic and acidic residues. A compositionally biased stretch (basic residues) spans 161–173 (SRSRSRSRSKSKR). 3 RRM domains span residues 239–322 (RRVY…RPSD), 359–437 (DRIF…RANQ), and 478–564 (EVIS…YPEN).

Belongs to the splicing factor SR family. In terms of tissue distribution, expressed in stems, leaves and apical buds.

It localises to the nucleus. Functionally, necessary for the splicing of pre-mRNA. Binds to the U -enriched regions of plant introns. This Nicotiana plumbaginifolia (Leadwort-leaved tobacco) protein is Splicing factor U2af large subunit B (U2AF65B).